Consider the following 189-residue polypeptide: Parkinson disease protein 7 homolog (189 aa).

At A2 the chain carries N-acetylalanine. 2 S-palmitoyl cysteine lipidation sites follow: C46 and C53. Phosphotyrosine is present on Y67. The active-site Nucleophile is C106. Residue C106 is modified to Cysteine sulfinic acid (-SO2H); alternate. Residue C106 is the site of S-palmitoyl cysteine; alternate attachment. H126 is a catalytic residue. A Glycyl lysine isopeptide (Lys-Gly) (interchain with G-Cter in SUMO) cross-link involves residue K130. K148 is subject to N6-acetyllysine. Residue K182 is modified to N6-succinyllysine.

It belongs to the peptidase C56 family. In terms of assembly, homodimer. Binds EFCAB6/DJBP and PIAS2. Part of a ternary complex containing PARK7, EFCAB6/DJBP and AR. Binds to HIPK1. Interacts (via N-terminus) with OTUD7B. Interacts with BBS1, CLCF1 and MTERF. Interacts (via C-terminus) with NCF1; the interaction is enhanced by LPS and modulates NCF1 phosphorylation and membrane translocation. Interacts with NENF. Deglycase activity does not require glutathione as a cofactor, however, glycated glutathione constitutes a PARK7 substrate. is required as a cofactor. Sumoylated on Lys-130 by PIAS2 or PIAS4; which is essential for cell-growth promoting activity and transforming activity. Post-translationally, undergoes cleavage of a C-terminal peptide and subsequent activation of protease activity in response to oxidative stress. Expressed in erythroblasts and in mature red blood cells from peripheral blood (at protein level). In pancreas, expression is higher in islets than surrounding exocrine tissues.

Its subcellular location is the cell membrane. The protein localises to the cytoplasm. It localises to the membrane raft. It is found in the nucleus. The protein resides in the mitochondrion. Its subcellular location is the endoplasmic reticulum. It carries out the reaction N(omega)-(1-hydroxy-2-oxopropyl)-L-arginyl-[protein] + H2O = lactate + L-arginyl-[protein] + H(+). It catalyses the reaction N(6)-(1-hydroxy-2-oxopropyl)-L-lysyl-[protein] + H2O = lactate + L-lysyl-[protein] + H(+). The catalysed reaction is S-(1-hydroxy-2-oxopropyl)-L-cysteinyl-[protein] + H2O = lactate + L-cysteinyl-[protein] + H(+). The enzyme catalyses N(omega)-(1-hydroxy-2-oxoethyl)-L-arginyl-[protein] + H2O = L-arginyl-[protein] + glycolate + H(+). It carries out the reaction N(6)-(1-hydroxy-2-oxoethyl)-L-lysyl-[protein] + H2O = glycolate + L-lysyl-[protein] + H(+). It catalyses the reaction S-(1-hydroxy-2-oxoethyl)-L-cysteinyl-[protein] + H2O = glycolate + L-cysteinyl-[protein] + H(+). The catalysed reaction is N(2)-(1-hydroxy-2-oxopropyl)-dGTP + H2O = lactate + dGTP + H(+). The enzyme catalyses N(2)-(1-hydroxy-2-oxopropyl)-GTP + H2O = lactate + GTP + H(+). It carries out the reaction N(2)-(1-hydroxy-2-oxopropyl)-GDP + H2O = lactate + GDP + H(+). It catalyses the reaction N(2)-(1-hydroxy-2-oxopropyl)-GMP + H2O = lactate + GMP + H(+). The catalysed reaction is N(2)-(1-hydroxy-2-oxoethyl)-dGTP + H2O = dGTP + glycolate + H(+). The enzyme catalyses N(2)-(1-hydroxy-2-oxoethyl)-GTP + H2O = glycolate + GTP + H(+). It carries out the reaction N(2)-(1-hydroxy-2-oxoethyl)-GDP + H2O = glycolate + GDP + H(+). It catalyses the reaction N(2)-(1-hydroxy-2-oxoethyl)-GMP + H2O = glycolate + GMP + H(+). The catalysed reaction is an N(2)-(1-hydroxy-2-oxopropyl)-guanosine in RNA + H2O = a guanosine in RNA + lactate + H(+). The enzyme catalyses an N(2)-(1-hydroxy-2-oxopropyl)-2'-deoxyguanosine in DNA + H2O = a 2'-deoxyguanosine in DNA + lactate + H(+). It carries out the reaction an N(2)-(1-hydroxy-2-oxoethyl)-guanosine in RNA + H2O = a guanosine in RNA + glycolate + H(+). It catalyses the reaction an N(2)-(1-hydroxy-2-oxoethyl)-2'-deoxyguanosine in DNA + H2O = a 2'-deoxyguanosine in DNA + glycolate + H(+). Multifunctional protein with controversial molecular function which plays an important role in cell protection against oxidative stress and cell death acting as oxidative stress sensor and redox-sensitive chaperone and protease. It is involved in neuroprotective mechanisms like the stabilization of NFE2L2 and PINK1 proteins, male fertility as a positive regulator of androgen signaling pathway as well as cell growth and transformation through, for instance, the modulation of NF-kappa-B signaling pathway. Has been described as a protein and nucleotide deglycase that catalyzes the deglycation of the Maillard adducts formed between amino groups of proteins or nucleotides and reactive carbonyl groups of glyoxals. But this function is rebuted by other works. As a protein deglycase, repairs methylglyoxal- and glyoxal-glycated proteins, and releases repaired proteins and lactate or glycolate, respectively. Deglycates cysteine, arginine and lysine residues in proteins, and thus reactivates these proteins by reversing glycation by glyoxals. Acts on early glycation intermediates (hemithioacetals and aminocarbinols), preventing the formation of advanced glycation endproducts (AGE) that cause irreversible damage. Also functions as a nucleotide deglycase able to repair glycated guanine in the free nucleotide pool (GTP, GDP, GMP, dGTP) and in DNA and RNA. Is thus involved in a major nucleotide repair system named guanine glycation repair (GG repair), dedicated to reversing methylglyoxal and glyoxal damage via nucleotide sanitization and direct nucleic acid repair. Protects histones from adduction by methylglyoxal, controls the levels of methylglyoxal-derived argininine modifications on chromatin. Able to remove the glycations and restore histone 3, histone glycation disrupts both local and global chromatin architecture by altering histone-DNA interactions as well as histone acetylation and ubiquitination levels. Displays a very low glyoxalase activity that may reflect its deglycase activity. Eliminates hydrogen peroxide and protects cells against hydrogen peroxide-induced cell death. Required for correct mitochondrial morphology and function as well as for autophagy of dysfunctional mitochondria. Plays a role in regulating expression or stability of the mitochondrial uncoupling proteins SLC25A14 and SLC25A27 in dopaminergic neurons of the substantia nigra pars compacta and attenuates the oxidative stress induced by calcium entry into the neurons via L-type channels during pacemaking. Regulates astrocyte inflammatory responses, may modulate lipid rafts-dependent endocytosis in astrocytes and neuronal cells. In pancreatic islets, involved in the maintenance of mitochondrial reactive oxygen species (ROS) levels and glucose homeostasis in an age- and diet dependent manner. Protects pancreatic beta cells from cell death induced by inflammatory and cytotoxic setting. Binds to a number of mRNAs containing multiple copies of GG or CC motifs and partially inhibits their translation but dissociates following oxidative stress. Metal-binding protein able to bind copper as well as toxic mercury ions, enhances the cell protection mechanism against induced metal toxicity. In macrophages, interacts with the NADPH oxidase subunit NCF1 to direct NADPH oxidase-dependent ROS production, and protects against sepsis. This is Parkinson disease protein 7 homolog from Mus musculus (Mouse).